The following is a 226-amino-acid chain: 2-C-methyl-D-erythritol 4-phosphate cytidylyltransferase (226 aa).

This sequence belongs to the IspD/TarI cytidylyltransferase family. IspD subfamily.

It catalyses the reaction 2-C-methyl-D-erythritol 4-phosphate + CTP + H(+) = 4-CDP-2-C-methyl-D-erythritol + diphosphate. Its pathway is isoprenoid biosynthesis; isopentenyl diphosphate biosynthesis via DXP pathway; isopentenyl diphosphate from 1-deoxy-D-xylulose 5-phosphate: step 2/6. In terms of biological role, catalyzes the formation of 4-diphosphocytidyl-2-C-methyl-D-erythritol from CTP and 2-C-methyl-D-erythritol 4-phosphate (MEP). This chain is 2-C-methyl-D-erythritol 4-phosphate cytidylyltransferase, found in Bacillus cereus (strain ATCC 10987 / NRS 248).